We begin with the raw amino-acid sequence, 277 residues long: Phosphate import ATP-binding protein PstB 2 (277 aa).

The ABC transporter domain maps to 31 to 272 (IEVPGLNLFY…PAKKQTEDYI (242 aa)). 63 to 70 (GPSGCGKS) contributes to the ATP binding site.

This sequence belongs to the ABC transporter superfamily. Phosphate importer (TC 3.A.1.7) family. In terms of assembly, the complex is composed of two ATP-binding proteins (PstB), two transmembrane proteins (PstC and PstA) and a solute-binding protein (PstS).

It is found in the cell inner membrane. It catalyses the reaction phosphate(out) + ATP + H2O = ADP + 2 phosphate(in) + H(+). Its function is as follows. Part of the ABC transporter complex PstSACB involved in phosphate import. Responsible for energy coupling to the transport system. The chain is Phosphate import ATP-binding protein PstB 2 from Pseudomonas syringae pv. syringae (strain B728a).